We begin with the raw amino-acid sequence, 384 residues long: Actin-binding Rho-activating protein (384 aa).

Positions 1–11 are enriched in basic and acidic residues; the sequence is MARGEKGRGEG. 3 disordered regions span residues 1–20, 32–159, and 181–211; these read MARG…LRKV, GWQQ…SPTR, and EQEE…EQDG. Residues 35–47 are compositionally biased toward polar residues; sequence QWANENSTRQAQE. The segment covering 134–145 has biased composition (acidic residues); it reads DGDEPEPEQPES. Serine 156 and serine 191 each carry phosphoserine. Actin-binding stretches follow at residues 202–302 and 303–384; these read ETEE…AERA and KRAE…TLLK. 2 interaction with actin regions span residues 243-288 and 355-384; these read SQVG…GDEG and MRAR…TLLK.

Binds F-actin and ABLIM1, ABLIM2 and ABLIM3. Interaction with ABLIM2 and ABLIM3 enhances activity. Specifically expressed in heart and skeletal muscles.

Its subcellular location is the cytoplasm. The protein localises to the myofibril. It is found in the sarcomere. It localises to the cytoskeleton. In terms of biological role, acts as an activator of serum response factor (SRF)-dependent transcription possibly by inducing nuclear translocation of MKL1 or MKL2 and through a mechanism requiring Rho-actin signaling. The protein is Actin-binding Rho-activating protein (ABRA) of Sus scrofa (Pig).